A 102-amino-acid polypeptide reads, in one-letter code: Urease subunit beta (102 aa).

It belongs to the urease beta subunit family. As to quaternary structure, heterotrimer of UreA (gamma), UreB (beta) and UreC (alpha) subunits. Three heterotrimers associate to form the active enzyme.

The protein resides in the cytoplasm. The enzyme catalyses urea + 2 H2O + H(+) = hydrogencarbonate + 2 NH4(+). The protein operates within nitrogen metabolism; urea degradation; CO(2) and NH(3) from urea (urease route): step 1/1. This is Urease subunit beta from Bordetella pertussis (strain Tohama I / ATCC BAA-589 / NCTC 13251).